The chain runs to 498 residues: Ribose import ATP-binding protein RbsA 1 (498 aa).

ABC transporter domains are found at residues 7–243 (LHIQ…VGRR) and 254–496 (PRGE…IGKS). Residue 39–46 (GENGAGKS) coordinates ATP.

This sequence belongs to the ABC transporter superfamily. Ribose importer (TC 3.A.1.2.1) family. As to quaternary structure, the complex is composed of an ATP-binding protein (RbsA), two transmembrane proteins (RbsC) and a solute-binding protein (RbsB).

The protein resides in the cell inner membrane. The catalysed reaction is D-ribose(out) + ATP + H2O = D-ribose(in) + ADP + phosphate + H(+). In terms of biological role, part of the ABC transporter complex RbsABC involved in ribose import. Responsible for energy coupling to the transport system. The chain is Ribose import ATP-binding protein RbsA 1 from Pasteurella multocida (strain Pm70).